The following is a 584-amino-acid chain: uncharacterized protein (584 aa).

Over residues 353-375 the composition is skewed to polar residues; that stretch reads NSEGQTNAETSLNGKGTVGNQWA. 3 disordered regions span residues 353–379, 400–426, and 463–565; these read NSEG…SPPE, LESK…VSSH, and SVDS…CNSG. The segment covering 502–511 has biased composition (polar residues); it reads KANSPASSRL. Positions 516–535 are enriched in basic and acidic residues; sequence DSSHLSKHVNFDKNPDHSEA.

This is an uncharacterized protein from Mus musculus (Mouse).